We begin with the raw amino-acid sequence, 397 residues long: ATP-dependent RNA helicase eIF4A (397 aa).

The Q motif signature appears at 23 to 51 (YKFDDLNLKPNIVRGIFGYGYETPSAIQQ). Positions 54–224 (ILPITEGRDV…TKFMNNPVRI (171 aa)) constitute a Helicase ATP-binding domain. 67–74 (AQSGTGKT) is a binding site for ATP. The DEAD box motif lies at 172-175 (DEAD). The 142-residue stretch at 255–396 (DLYDSISVTQ…EMPADIGSLF (142 aa)) folds into the Helicase C-terminal domain.

Belongs to the DEAD box helicase family. eIF4A subfamily. As to quaternary structure, component of the eIF4F complex, which composition varies with external and internal environmental conditions. It is composed of at least eIF4A, eIF4E and eIF4G.

It is found in the cytoplasm. It catalyses the reaction ATP + H2O = ADP + phosphate + H(+). ATP-dependent RNA helicase which is a subunit of the eIF4F complex involved in cap recognition and is required for mRNA binding to ribosome. In the current model of translation initiation, eIF4A unwinds RNA secondary structures in the 5'-UTR of mRNAs which is necessary to allow efficient binding of the small ribosomal subunit, and subsequent scanning for the initiator codon. The polypeptide is ATP-dependent RNA helicase eIF4A (TIF1) (Lodderomyces elongisporus (strain ATCC 11503 / CBS 2605 / JCM 1781 / NBRC 1676 / NRRL YB-4239) (Yeast)).